The primary structure comprises 508 residues: CUGBP Elav-like family member 2 (508 aa).

Necessary for RNA-binding, TNNT2 exon 5 and NMDA R1 exon 21 inclusion regions lie at residues 1–283 (MRCP…LQNL) and 357–508 (LAGM…SKPY). RRM domains follow at residues 40–123 (IKMF…PADS), 132–212 (RKLF…FADT), and 423–501 (ANLF…LKRS).

The protein belongs to the CELF/BRUNOL family. In terms of assembly, interacts with A1CF. Expressed in tongue, spleen and brain (at protein level). Expressed in liver, thigh, stomach, lung and heart to very low levels (at protein level). Expressed in heart, brain, lung and muscle.

Its subcellular location is the nucleus. The protein resides in the cytoplasm. Its function is as follows. RNA-binding protein implicated in the regulation of several post-transcriptional events. Involved in pre-mRNA alternative splicing, mRNA translation and stability. Mediates exon inclusion and/or exclusion in pre-mRNA that are subject to tissue-specific and developmentally regulated alternative splicing. Specifically activates exon 5 inclusion of TNNT2 in embryonic, but not adult, skeletal muscle. Activates TNNT2 exon 5 inclusion by antagonizing the repressive effect of PTB. Acts both as an activator and as a repressor of a pair of coregulated exons: promotes inclusion of the smooth muscle (SM) exon but exclusion of the non-muscle (NM) exon in actinin pre-mRNAs. Promotes inclusion of exonS 21 and exclusion of exon 5 of the NMDA receptor R1 pre-mRNA. Involved in the apoB RNA editing activity. Increases COX2 mRNA stability and inhibits COX2 mRNA translation in epithelial cells after radiation injury. Modulates the cellular apoptosis program by regulating COX2-mediated prostaglandin E2 (PGE2) expression. Binds to (CUG)n triplet repeats in the 3'-UTR of transcripts such as DMPK. Binds to the muscle-specific splicing enhancer (MSE) intronic sites flanking the TNNT2 alternative exon 5. Binds preferentially to UG-rich sequences, in particular UG repeat and UGUU motifs. Binds to apoB mRNA, specifically to AU-rich sequences located immediately upstream of the edited cytidine. Binds AU-rich sequences in the 3'-UTR of COX2 mRNA. Binds to an intronic RNA element responsible for the silencing of exon 21 splicing. Binds to (CUG)n repeats. May be a specific regulator of miRNA biogenesis. Binds to primary microRNA pri-MIR140 and, with CELF1, negatively regulates the processing to mature miRNA. The polypeptide is CUGBP Elav-like family member 2 (Celf2) (Mus musculus (Mouse)).